Reading from the N-terminus, the 419-residue chain is Methyltransferase/ribosomally synthesized type I borosin cyclic peptide precursor gjuMa (419 aa).

The tract at residues 1-255 (MATPIATTTN…AISTLYVPPR (255 aa)) is methyltransferase domain. Active-site residues include Arg79, Tyr83, and Tyr105. Residues Tyr105, His107, Val110, Ala137, Gln179, Gly217, Ser248, and Thr249 each coordinate S-adenosyl-L-methionine. Residues 256–381 (DISPVDPTMA…GAVYALMSRP (126 aa)) are clasp domain. The precursor leader stretch occupies residues 382 to 404 (TGDIAREKELTNDEIANNHGAPY). The residue at position 408 (Ser408) is an N-methylserine. Ala409 is modified (N-methylalanine). N-methylvaline is present on Val410. 2 positions are modified to N-methylisoleucine: Ile411 and Ile412. N-methylalanine occurs at positions 413 and 414. Ile415 and Ile416 each carry N-methylisoleucine.

The protein in the N-terminal section; belongs to the precorrin methyltransferase family. Homodimer. GjuMA automethylates at Ser-408, Ala-409, Val-410, Ile-411, Ile-412, Ala-413, Ala-414, Ile-415 and Ile-416 before being processed by ae prolyloligopeptidase which likely forms a peptidyl ester upon removal of the follower propeptide, which then undergoes macrocyclization with the N-terminus of the modified core peptide. Peptide backbone alpha-N-methylations change the physicochemical properties of amide bonds to provide structural constraints and other favorable characteristics including biological membrane permeability to peptides.

It participates in secondary metabolite biosynthesis. In terms of biological role, fusion protein of the methyltransferase gjuM and the type I borosin core peptide; part of the gene cluster that mediates the biosynthesis of a type I borosin, a highly methylated cyclic peptide with potent biological activities. Type I borosins derive from the C-terminus of the fusion protein, and it is the same protein that methylates its own C-terminus using S-adenosyl methionine (SAM). The C-terminus is subsequently cleaved off and macrocyclized by a prolyloligopeptidase to give the final product. The chain is Methyltransferase/ribosomally synthesized type I borosin cyclic peptide precursor gjuMa from Gymnopilus junonius (Spectacular rustgill mushroom).